The following is a 100-amino-acid chain: Cysteine-rich venom protein VAR1 (100 aa).

A signal peptide spans 1-22; sequence MILLKLYLTLAAILCQSRGTTS. An SCP domain is found at 41-81; the sequence is NKHNDLRRTVDPPAKNMLKMSWDNIIAESAKRAALRCNQNE.

Belongs to the CRISP family. Post-translationally, contains 8 disulfide bonds. In terms of tissue distribution, expressed by the venom gland.

The protein resides in the secreted. Functionally, blocks ryanodine receptors, and potassium channels. This is Cysteine-rich venom protein VAR1 from Varanus acanthurus (Ridge-tailed monitor).